A 226-amino-acid chain; its full sequence is Ribosomal RNA small subunit methyltransferase G (226 aa).

S-adenosyl-L-methionine contacts are provided by residues Gly-83, Phe-88, 136-137, and Arg-152; that span reads IE. Positions 199–226 are disordered; that stretch reads FSPSQSDPEGSVLKVRGLHGPDGQPHRR.

The protein belongs to the methyltransferase superfamily. RNA methyltransferase RsmG family.

It is found in the cytoplasm. The enzyme catalyses guanosine(527) in 16S rRNA + S-adenosyl-L-methionine = N(7)-methylguanosine(527) in 16S rRNA + S-adenosyl-L-homocysteine. Its function is as follows. Specifically methylates the N7 position of guanine in position 527 of 16S rRNA. The sequence is that of Ribosomal RNA small subunit methyltransferase G from Parvibaculum lavamentivorans (strain DS-1 / DSM 13023 / NCIMB 13966).